The following is a 520-amino-acid chain: Transactivator/viroplasmin protein (520 aa).

Positions 487 to 520 are disordered; the sequence is QDASADSGPKDGPPPTRSIVEKEDVPTTSSKQVD.

Belongs to the caulimoviridae viroplasmin family.

Its subcellular location is the host cytoplasm. Functionally, enhances the ribosomal termination-reinitiation event leading to the translation of major open reading frames on the polycistronic viral RNAs. The sequence is that of Transactivator/viroplasmin protein from Cauliflower mosaic virus (strain CM-1841) (CaMV).